The chain runs to 146 residues: Late protein OPG112 (146 aa).

The chain crosses the membrane as a helical span at residues 10–32 (LAMTAFFGELNTLDIMALIMSIF).

This sequence belongs to the orthopoxvirus OPG112 family.

Its subcellular location is the host membrane. The protein localises to the host cytoplasm. Functionally, contributes to the formation of crescents and immature virions (IV). Interacts with phosphatidylinositol-3-phosphate (PI3P) and phosphatidylinositol-4-phosphate (PI4P) lipids in order to form virion membranes. Mechanistically, mediates proper formation of OPG125-hexamers, and hence the honey comb lattice and spherical immature virus. This Homo sapiens (Human) protein is Late protein OPG112 (OPG112).